Reading from the N-terminus, the 440-residue chain is tRNA-2-methylthio-N(6)-dimethylallyladenosine synthase (440 aa).

The MTTase N-terminal domain occupies 2–117 (KGLYIKTYGC…LPELIVKASR (116 aa)). Cys11, Cys47, Cys80, Cys157, Cys161, and Cys164 together coordinate [4Fe-4S] cluster. One can recognise a Radical SAM core domain in the interval 143-374 (NSQGSSAFLA…QELISKQQLE (232 aa)). In terms of domain architecture, TRAM spans 377–440 (QSMIGKTIPV…RQNSLLGCAA (64 aa)).

The protein belongs to the methylthiotransferase family. MiaB subfamily. Monomer. [4Fe-4S] cluster is required as a cofactor.

It is found in the cytoplasm. The catalysed reaction is N(6)-dimethylallyladenosine(37) in tRNA + (sulfur carrier)-SH + AH2 + 2 S-adenosyl-L-methionine = 2-methylsulfanyl-N(6)-dimethylallyladenosine(37) in tRNA + (sulfur carrier)-H + 5'-deoxyadenosine + L-methionine + A + S-adenosyl-L-homocysteine + 2 H(+). Catalyzes the methylthiolation of N6-(dimethylallyl)adenosine (i(6)A), leading to the formation of 2-methylthio-N6-(dimethylallyl)adenosine (ms(2)i(6)A) at position 37 in tRNAs that read codons beginning with uridine. The sequence is that of tRNA-2-methylthio-N(6)-dimethylallyladenosine synthase from Wolbachia pipientis subsp. Culex pipiens (strain wPip).